Reading from the N-terminus, the 259-residue chain is Imidazole glycerol phosphate synthase subunit HisF (259 aa).

Residues Asp11 and Asp130 contribute to the active site.

Belongs to the HisA/HisF family. As to quaternary structure, heterodimer of HisH and HisF.

It is found in the cytoplasm. It carries out the reaction 5-[(5-phospho-1-deoxy-D-ribulos-1-ylimino)methylamino]-1-(5-phospho-beta-D-ribosyl)imidazole-4-carboxamide + L-glutamine = D-erythro-1-(imidazol-4-yl)glycerol 3-phosphate + 5-amino-1-(5-phospho-beta-D-ribosyl)imidazole-4-carboxamide + L-glutamate + H(+). It participates in amino-acid biosynthesis; L-histidine biosynthesis; L-histidine from 5-phospho-alpha-D-ribose 1-diphosphate: step 5/9. Functionally, IGPS catalyzes the conversion of PRFAR and glutamine to IGP, AICAR and glutamate. The HisF subunit catalyzes the cyclization activity that produces IGP and AICAR from PRFAR using the ammonia provided by the HisH subunit. The polypeptide is Imidazole glycerol phosphate synthase subunit HisF (Lactococcus lactis subsp. cremoris (strain SK11)).